The sequence spans 453 residues: MNLYELFLNQKLLYGTDPHFNGVFLTLLEKFGLHFKDLTALWKHAKTITDFDEQGIVNALKAYFVDQLPLPYITGSVKLGSLTFKTQPGVFIPRADSLALLKVVKAQNLKTAVDLCCGSGTLAIALKKRFPHLNVYGSDLNPQALQLAAQNARLNMVEVQWIEADFLAALAQVNTPIDLIITNPPYLNESQLDQTLNHEPRNSLVADGNGILFYQKLYNFLLGNRQVKQVILECSPTQKKEFLALFSIFKTSEIYTSHKQFIGLSIDNTKLPVLKIAQTKQIKALLDKGMTAIIPTDTQIGLMSYCQQDLDHIKQRDPNKHYVQFLAPSQINQLPKQLQKLAKLFWPGAYTFIVDGQSYRLPNSPQLLKLLKTVGLIYCTSANQAKQKPFGKLSAYQNDPYWVQQNCFIVQNSFKSNNEPSLIYNLDTKQIVRGSSTQLQRFQALLAKHKLRH.

Positions 276–437 (IAQTKQIKAL…TKQIVRGSST (162 aa)) constitute a YrdC-like domain.

This is an uncharacterized protein from Mycoplasma pneumoniae (strain ATCC 29342 / M129 / Subtype 1) (Mycoplasmoides pneumoniae).